The primary structure comprises 622 residues: Cytochrome c oxidase subunit 1 (622 aa).

At 1–27 (MLNALTEKRTRGSMLWDYLTTVDHKKI) the chain is on the extracellular side. Residues 28–46 (AILYLVAGGFFFLVGGIEA) traverse the membrane as a helical segment. Residues 47–68 (MFIRIQLAKPENAFLSAQAYNE) are Cytoplasmic-facing. The helical transmembrane segment at 69–88 (VMTMHGTTMIFLAAMPLLFA) threads the bilayer. Histidine 73 is a binding site for Fe(II)-heme a. Residues 89–110 (LMNAVVPLQIGARDVSFPFLNA) are Extracellular-facing. A helical membrane pass occupies residues 111–128 (LGFWLFFFGGIFLNLSWF). Residues 129–159 (LGGAPDAGWTSYASLSLHSKGHGIDFFVLGL) lie on the Cytoplasmic side of the membrane. Residues 160–178 (QISGLGTLIAGINFLATII) traverse the membrane as a helical segment. Over 179 to 196 (NMRAPGMTYMRLPLFTWT) the chain is Extracellular. The chain crosses the membrane as a helical span at residues 197 to 215 (TFVASALILFAFPPLTVGL). Residues 216–241 (ALMMLDRLFGTNFFNPELGGNTVIWE) lie on the Cytoplasmic side of the membrane. Residues 242-261 (HLFWIFGHPEVYILILPAFG) form a helical membrane-spanning segment. Cu cation-binding residues include histidine 249 and tyrosine 253. The segment at residues 249–253 (HPEVY) is a cross-link (1'-histidyl-3'-tyrosine (His-Tyr)). Over 262 to 284 (IFSEVIPVFARKRLFGYSSMVFA) the chain is Extracellular. Residues 285–304 (IVLIGFLGFMVWVHHMFTTG) traverse the membrane as a helical segment. The Cu cation site is built by histidine 298 and histidine 299. The Cytoplasmic segment spans residues 305 to 312 (LGPIANAI). The chain crosses the membrane as a helical span at residues 313 to 331 (FAVATMAIAIPTGIKIFNW). Residues 332–346 (LLTIWGGNVKYTTAM) are Extracellular-facing. A helical transmembrane segment spans residues 347–366 (LYAVSFIPSFVLGGVTGVML). Residues 367 to 374 (AAAAADYQ) lie on the Cytoplasmic side of the membrane. Residues 375 to 394 (FHDTYFVVAHFHYVIIGGVV) traverse the membrane as a helical segment. Histidine 384 contacts heme a3. Histidine 386 contacts Fe(II)-heme a. The Extracellular segment spans residues 395–421 (FGLLAGVHFWWPKMFGKILHETMGKIS). A helical transmembrane segment spans residues 422 to 441 (FVLFFIGFHLTFFIQHFVGL). The Cytoplasmic portion of the chain corresponds to 442–459 (MGMPRRVYTFLPGQGLET). Residues 460-479 (GNLISTIGAFFMAAAVILLL) traverse the membrane as a helical segment. The Extracellular segment spans residues 480–552 (VNVIWTSVKG…EPVDDIHMPN (73 aa)). A helical transmembrane segment spans residues 553 to 572 (GSILPLIISFGLFVAAFGLL). At 573-580 (YRSDYAWG) the chain is on the cytoplasmic side. A helical transmembrane segment spans residues 581 to 604 (LPVIFIGLGITFITMLLRSVIDDH). Over 605-622 (GYHIHKEELPNDDKGVKA) the chain is Cytoplasmic.

The protein belongs to the heme-copper respiratory oxidase family. Cu(2+) serves as cofactor. The cofactor is heme.

The protein resides in the cell membrane. The enzyme catalyses 4 Fe(II)-[cytochrome c] + O2 + 8 H(+)(in) = 4 Fe(III)-[cytochrome c] + 2 H2O + 4 H(+)(out). Its pathway is energy metabolism; oxidative phosphorylation. Functionally, cytochrome c oxidase is the component of the respiratory chain that catalyzes the reduction of oxygen to water. Subunits 1-3 form the functional core of the enzyme complex. Co I is the catalytic subunit of the enzyme. Electrons originating in cytochrome c are transferred via the copper A center of subunit 2 and heme a of subunit 1 to the bimetallic center formed by heme a3 and copper B. This cytochrome c oxidase shows proton pump activity across the membrane in addition to the electron transfer. In Bacillus subtilis (strain 168), this protein is Cytochrome c oxidase subunit 1 (ctaD).